Consider the following 282-residue polypeptide: 4-diphosphocytidyl-2-C-methyl-D-erythritol kinase (282 aa).

Residue Lys-9 is part of the active site. 98-108 (PMGGGLGGGSS) is a binding site for ATP. Asp-140 is a catalytic residue.

This sequence belongs to the GHMP kinase family. IspE subfamily. In terms of assembly, homodimer.

The enzyme catalyses 4-CDP-2-C-methyl-D-erythritol + ATP = 4-CDP-2-C-methyl-D-erythritol 2-phosphate + ADP + H(+). Its pathway is isoprenoid biosynthesis; isopentenyl diphosphate biosynthesis via DXP pathway; isopentenyl diphosphate from 1-deoxy-D-xylulose 5-phosphate: step 3/6. Its function is as follows. Catalyzes the phosphorylation of the position 2 hydroxy group of 4-diphosphocytidyl-2C-methyl-D-erythritol. This Salmonella heidelberg (strain SL476) protein is 4-diphosphocytidyl-2-C-methyl-D-erythritol kinase.